Consider the following 519-residue polypeptide: Glutamate--cysteine ligase (519 aa).

This sequence belongs to the glutamate--cysteine ligase type 1 family. Type 1 subfamily.

The catalysed reaction is L-cysteine + L-glutamate + ATP = gamma-L-glutamyl-L-cysteine + ADP + phosphate + H(+). It participates in sulfur metabolism; glutathione biosynthesis; glutathione from L-cysteine and L-glutamate: step 1/2. This Erwinia tasmaniensis (strain DSM 17950 / CFBP 7177 / CIP 109463 / NCPPB 4357 / Et1/99) protein is Glutamate--cysteine ligase.